We begin with the raw amino-acid sequence, 37 residues long: Potassium channel toxin alpha-KTx 15.1 (37 aa).

Gln-1 carries the pyrrolidone carboxylic acid modification. 3 cysteine pairs are disulfide-bonded: Cys-8–Cys-28, Cys-13–Cys-33, and Cys-17–Cys-35.

The protein belongs to the short scorpion toxin superfamily. Potassium channel inhibitor family. Alpha-KTx 15 subfamily. Expressed by the venom gland.

Its subcellular location is the secreted. Functionally, blocker of voltage-gated potassium channels (600 nM of the toxin induces a block of 25% of hERG currents). May also inhibit Kv4/KCND when coexpressed with DPP6 or DPP10. In adult rat brain, it blocks the transient potassium channels in cerebellum granular cells. Blocks potassium channels by a simple 'plugging mechanism', in which a single toxin molecule finds a specific receptor site in the external vestibule of the potassium channel and thereby occludes the outer entry to the potassium conducting pore. The polypeptide is Potassium channel toxin alpha-KTx 15.1 (Androctonus australis (Sahara scorpion)).